A 355-amino-acid chain; its full sequence is tRNA-specific 2-thiouridylase MnmA (355 aa).

ATP contacts are provided by residues 6-13 (LLSGGVDS) and Leu-33. Cys-100 serves as the catalytic Nucleophile. A disulfide bond links Cys-100 and Cys-195. Gly-123 is a binding site for ATP. The interaction with tRNA stretch occupies residues 145–147 (KDQ). The active-site Cysteine persulfide intermediate is the Cys-195.

This sequence belongs to the MnmA/TRMU family.

Its subcellular location is the cytoplasm. The catalysed reaction is S-sulfanyl-L-cysteinyl-[protein] + uridine(34) in tRNA + AH2 + ATP = 2-thiouridine(34) in tRNA + L-cysteinyl-[protein] + A + AMP + diphosphate + H(+). In terms of biological role, catalyzes the 2-thiolation of uridine at the wobble position (U34) of tRNA, leading to the formation of s(2)U34. This Borreliella burgdorferi (strain ATCC 35210 / DSM 4680 / CIP 102532 / B31) (Borrelia burgdorferi) protein is tRNA-specific 2-thiouridylase MnmA.